We begin with the raw amino-acid sequence, 637 residues long: Protein kinase domain-containing protein ppk3 (637 aa).

The region spanning methionine 1–isoleucine 296 is the Protein kinase domain. The stretch at lysine 414–leucine 450 is one HEAT repeat. The segment covering asparagine 576–asparagine 586 has biased composition (basic and acidic residues). Residues asparagine 576–leucine 637 form a disordered region. Acidic residues predominate over residues glutamate 608 to valine 631.

Its subcellular location is the golgi apparatus. The polypeptide is Protein kinase domain-containing protein ppk3 (ppk3) (Schizosaccharomyces pombe (strain 972 / ATCC 24843) (Fission yeast)).